Here is a 447-residue protein sequence, read N- to C-terminus: Phosphoglucosamine mutase (447 aa).

Ser-101 functions as the Phosphoserine intermediate in the catalytic mechanism. Mg(2+) is bound by residues Ser-101, Asp-242, Asp-244, and Asp-246. At Ser-101 the chain carries Phosphoserine.

This sequence belongs to the phosphohexose mutase family. Mg(2+) serves as cofactor. Activated by phosphorylation.

It catalyses the reaction alpha-D-glucosamine 1-phosphate = D-glucosamine 6-phosphate. Catalyzes the conversion of glucosamine-6-phosphate to glucosamine-1-phosphate. This Bradyrhizobium diazoefficiens (strain JCM 10833 / BCRC 13528 / IAM 13628 / NBRC 14792 / USDA 110) protein is Phosphoglucosamine mutase.